A 145-amino-acid polypeptide reads, in one-letter code: UPF0735 ACT domain-containing protein CLH_2637 (145 aa).

The region spanning 69–144 (TFNLIVKDQT…YVEKIEFVAM (76 aa)) is the ACT domain.

Belongs to the UPF0735 family.

The protein is UPF0735 ACT domain-containing protein CLH_2637 of Clostridium botulinum (strain Alaska E43 / Type E3).